We begin with the raw amino-acid sequence, 185 residues long: CD160 antigen (185 aa).

The signal sequence occupies residues 1–27 (MQRILMAPGQSCCALAILLAIVNFQHG). One can recognise an Ig-like V-type domain in the interval 28-136 (GCIHVTSSAS…HGHFLSVLVT (109 aa)). Disulfide bonds link Cys-47–Cys-115 and Cys-64–Cys-71. Asn-138 and Asn-156 each carry an N-linked (GlcNAc...) asparagine glycan. The GPI-anchor amidated serine moiety is linked to residue Ser-160. The propeptide at 161–185 (SGFLQVKAWGMLVTSLVALQALYTL) is removed in mature form.

As to quaternary structure, homomultimer; disulfide-linked. Interacts with classical and non-classical MHC class I molecules. Interacts with TNFRSF14 (via cysteine-rich domain 1); this interaction is direct. Interacts with LCK and CD247/CD3 zeta chain. Expressed in resting and activated NK cell subsets (at protein level). Expressed in resting NKT cells (at protein level). Expressed in activated CD8+ T cells (at protein level). Highly expressed in intraepithelial lymphocyte (IEL) subsets, particularly in innate-like CD8A-positive IELs (at protein level).

The protein localises to the cell membrane. The protein resides in the secreted. Functionally, receptor on immune cells capable to deliver stimulatory or inhibitory signals that regulate cell activation and differentiation. Exists as a GPI-anchored and as a transmembrane form, each likely initiating distinct signaling pathways via phosphoinositol 3-kinase in activated NK cells and via LCK and CD247/CD3 zeta chain in activated T cells. Receptor for both classical and non-classical MHC class I molecules. Receptor or ligand for TNF superfamily member TNFRSF14, participating in bidirectional cell-cell contact signaling between antigen presenting cells and lymphocytes. Upon ligation of TNFRSF14, provides stimulatory signal to NK cells enhancing IFNG production and anti-tumor immune response. On activated CD4+ T cells, interacts with TNFRSF14 and down-regulates CD28 costimulatory signaling, restricting memory and alloantigen-specific immune response. In the context of bacterial infection, acts as a ligand for TNFRSF14 on epithelial cells, triggering the production of antimicrobial proteins and pro-inflammatory cytokines. The soluble GPI-cleaved form, usually released by activated lymphocytes, might play an immune regulatory role by limiting lymphocyte effector functions. The sequence is that of CD160 antigen from Mus musculus (Mouse).